Consider the following 833-residue polypeptide: Prickle-like protein 1 (833 aa).

The disordered stretch occupies residues 1 to 22 (MPLEMDQKISKHTFGCQRSSTS). Residues 14–122 (FGCQRSSTSD…NIKMLSRAVM (109 aa)) enclose the PET domain. 3 LIM zinc-binding domains span residues 124–188 (AMCE…ELLK), 189–249 (PRCS…HYAE), and 250–313 (YCES…EDVH). Disordered regions lie at residues 312-346 (VHAS…ADQC), 432-456 (EDNR…RNSR), 603-702 (CQEK…ERNP), 767-786 (CSSS…QPIP), and 805-833 (NALS…CIIS). 2 stretches are compositionally biased toward basic and acidic residues: residues 432–453 (EDNR…DLQR) and 603–614 (CQEKPPPEEKPM). Basic residues predominate over residues 669 to 680 (RPHHHRRRKSRK). The segment covering 817 to 833 (TKSKKKKGHKGKNCIIS) has biased composition (basic residues). The residue at position 830 (cysteine 830) is a Cysteine methyl ester. The S-farnesyl cysteine moiety is linked to residue cysteine 830. A propeptide spans 831–833 (IIS) (removed in mature form).

Belongs to the prickle / espinas / testin family. In terms of assembly, interacts with dvl2/dsh and mapk8/jnk1.

The protein localises to the cell membrane. Its function is as follows. Acts in a planar cell polarity (PCP) complex; polarization along the apical/basal axis of epithelial cells. Regulates the polarized assembly of fibronectrin on the surface of the mesoderm during gastrulation. Essential for gastrulation cell movements, cooperating with dvl2/dsh to activate jnk. Acts together with tes to control axial elongation. In Xenopus tropicalis (Western clawed frog), this protein is Prickle-like protein 1.